The chain runs to 198 residues: Heme oxygenase PigA (198 aa).

A heme b-binding site is contributed by His26.

Belongs to the heme oxygenase family.

It catalyses the reaction heme b + 3 AH2 + 3 O2 + 2 H(+) = biliverdin IXbeta + CO + Fe(2+) + 3 A + 3 H2O. The catalysed reaction is heme b + 3 AH2 + 3 O2 + 3 H(+) = biliverdin IXdelta + CO + Fe(2+) + 3 A + 3 H2O. In terms of biological role, involved in heme degradation. Catalyzes the degradation of heme to biliverdin, with the release of iron. Forms biliverdin delta (70%) and beta (30%). Under anaerobic conditions ferredoxin--NADP(+) reductase (fpr) can provide the necessary electrons; Bfd is not required. The polypeptide is Heme oxygenase PigA (Pseudomonas aeruginosa (strain ATCC 15692 / DSM 22644 / CIP 104116 / JCM 14847 / LMG 12228 / 1C / PRS 101 / PAO1)).